The following is a 739-amino-acid chain: DEAD-box ATP-dependent RNA helicase 32 (739 aa).

A Q motif motif is present at residues 71–99; sequence RKFAQLPISDKTKRGLKDAKYVDMTDVQS. The region spanning 102–277 is the Helicase ATP-binding domain; it reads IPHALCGRDI…RLSLRDPEYI (176 aa). 115–122 provides a ligand contact to ATP; sequence ARTGSGKT. Positions 225 to 228 match the DEAD box motif; that stretch reads DEAD. Positions 303–461 constitute a Helicase C-terminal domain; it reads KLDMLWSFIK…EVSRLLAALL (159 aa). Positions 643–689 form a coiled coil; sequence GAEMRKADIEDKKVDKERRREKRMKQKIKRKRGAMEDEEEEEEEDHD. Residues 656-725 form a disordered region; it reads VDKERRREKR…GGKINTDSLS (70 aa). The segment covering 661–674 has biased composition (basic residues); the sequence is RREKRMKQKIKRKR. Residues 678–688 show a composition bias toward acidic residues; it reads EDEEEEEEEDH.

Belongs to the DEAD box helicase family. DDX10/DBP4 subfamily.

The catalysed reaction is ATP + H2O = ADP + phosphate + H(+). The protein is DEAD-box ATP-dependent RNA helicase 32 (RH32) of Arabidopsis thaliana (Mouse-ear cress).